The sequence spans 48 residues: Large ribosomal subunit protein bL33A (48 aa).

Belongs to the bacterial ribosomal protein bL33 family.

The chain is Large ribosomal subunit protein bL33A from Exiguobacterium sibiricum (strain DSM 17290 / CCUG 55495 / CIP 109462 / JCM 13490 / 255-15).